The primary structure comprises 266 residues: Large ribosomal subunit protein uL3 (266 aa).

The tract at residues 124–149 is disordered; that stretch reads NQKIGPKSHGGGGGSKPVRQTGSLGD.

This sequence belongs to the universal ribosomal protein uL3 family. Part of the 50S ribosomal subunit. Forms a cluster with proteins L14 and L19.

In terms of biological role, one of the primary rRNA binding proteins, it binds directly near the 3'-end of the 23S rRNA, where it nucleates assembly of the 50S subunit. This is Large ribosomal subunit protein uL3 from Mycoplasmopsis pulmonis (strain UAB CTIP) (Mycoplasma pulmonis).